A 1024-amino-acid chain; its full sequence is Multidrug resistance protein MdtC (1024 aa).

The next 11 helical transmembrane spans lie at 15-35 (WLLT…LPVA), 333-353 (EVEQ…FAFL), 360-380 (LIPA…MYLC), 387-407 (LSLM…IVVL), 431-451 (VGFT…PLLL), 463-483 (FAIT…TLTP), 528-548 (WGLL…ISIP), 853-873 (LWLI…LYES), 897-917 (LFNA…IGIV), 953-973 (PIIM…LGSG), and 984-1004 (ITIV…TPVV).

This sequence belongs to the resistance-nodulation-cell division (RND) (TC 2.A.6) family. MdtC subfamily. Part of a tripartite efflux system composed of MdtA, MdtB and MdtC. MdtC forms a heteromultimer with MdtB.

The protein resides in the cell inner membrane. The protein is Multidrug resistance protein MdtC of Erwinia tasmaniensis (strain DSM 17950 / CFBP 7177 / CIP 109463 / NCPPB 4357 / Et1/99).